Here is a 171-residue protein sequence, read N- to C-terminus: UPF0316 protein EAT1b_0871 (171 aa).

3 consecutive transmembrane segments (helical) span residues Ile-4–Met-24, Ile-32–Phe-52, and Thr-57–Val-77.

This sequence belongs to the UPF0316 family.

It localises to the cell membrane. This chain is UPF0316 protein EAT1b_0871, found in Exiguobacterium sp. (strain ATCC BAA-1283 / AT1b).